Consider the following 308-residue polypeptide: UPF0282 protein M1425_2116 (308 aa).

The protein belongs to the UPF0282 family.

The chain is UPF0282 protein M1425_2116 from Saccharolobus islandicus (strain M.14.25 / Kamchatka #1) (Sulfolobus islandicus).